The primary structure comprises 127 residues: MSAAGARGLRATYHRLLDKVELMLPEKLRPLYNHPAGPRTVFFWAPIMKWGLVCAGLADMARPAEKLSTAQSAVLMATGFIWSRYSLVIIPKNWSLFAVNFFVGAAGASQLFRIWRYNQELKAKAHK.

At 2–40 (SAAGARGLRATYHRLLDKVELMLPEKLRPLYNHPAGPRT) the chain is on the mitochondrial matrix side. The chain crosses the membrane as a helical span at residues 41–61 (VFFWAPIMKWGLVCAGLADMA). The Mitochondrial intermembrane portion of the chain corresponds to 62 to 72 (RPAEKLSTAQS). Residues 73-90 (AVLMATGFIWSRYSLVII) form a helical membrane-spanning segment. Residues 91-95 (PKNWS) lie on the Mitochondrial matrix side of the membrane. Residues 96-115 (LFAVNFFVGAAGASQLFRIW) traverse the membrane as a helical segment. Residues 116-127 (RYNQELKAKAHK) are Mitochondrial intermembrane-facing.

This sequence belongs to the mitochondrial pyruvate carrier (MPC) (TC 2.A.105) family. In terms of assembly, homodimer. Homooligomer. Forms heterodimers with MPC1 and MPC1L. The heterodimer is the more stable and dominant form.

It is found in the mitochondrion inner membrane. The enzyme catalyses pyruvate(out) + H(+)(out) = pyruvate(in) + H(+)(in). In terms of biological role, mediates the uptake of pyruvate into mitochondria. This is Mitochondrial pyruvate carrier 2 (MPC2) from Homo sapiens (Human).